Consider the following 837-residue polypeptide: MFSSSSRPSKEPLLFDIRLRNLDNDVLLIKGPPDEASSVLLSGTIVLSITEPIQIKSLALRLFGRLRLNIPTVLQTVHGPHKRYSKFERNIYSHFWDDFNIKSYFQNLYDNHNNGKITISSKSSTNLAALPKRKRALSTASLISSNGQTSASKNYHTLVKGNYEFPFSAIIPGSLVESVEGLPNAAVTYALEATIERPKQPDLICKKHLRVIRTLAIDAVELSETVSVDNSWPEKVDYTISIPTKAIAIGSSTMINILIVPILKGLKLGPVRISLVENSQYCGSYGGVINQERMVAKLKLKDPLKHVAQIKKKRSLNEAADEGVDTDTGEFQDKWEVRALLNIPASLTKCSQDCRILSNIKVRHKIKFTISLLNPDGHISELRAALPVQLFISPFVPVNVKTSDVIERTLKTFGPSYQVTSQHDNSFSSKNFVDDSEEDVIFQRSASALQLSSMPTIVSGSTLNINSTDAEATAVADTTMVTSLMVPPNYGNHVYDRVYGEVTNEDETSASASSSAVESQAIHNIQNLYISDSNNSNNPILAPNPQIKIEDDSLNNCDSRGDSVNNSNLNLVNSNLTISENWNNNSPSANRYNNIINAGLNSPSLTPSFAHLSRRNSYSRQTSSTSLKNDLELTDLSRVPSYDKAMKSDMIGEDLPPAYPEEELGVQENKKIELERPQILHHKSTSSLLPLPGSSKSSNNLKRSSSRTHLSHSPLPRNNSGSSVSLQQLARNNTDSSFNLNLSFTSAKSSTGSRHFPFNMTTSFTSNSSSKNNSHFDKTDSTSDANKPREEENYTSATHNRRSRSSSVRSNNSNSPLRQGTGSFANLMEMFTKRDRS.

Residues serine 138 and serine 141 each carry the phosphoserine modification. A Glycyl lysine isopeptide (Lys-Gly) (interchain with G-Cter in ubiquitin) cross-link involves residue lysine 401. The residue at position 436 (serine 436) is a Phosphoserine. Positions 487 to 490 (PPNY) match the PY-motif motif. At serine 536 the chain carries Phosphoserine. A PY-motif motif is present at residues 656–659 (PPAY). 2 disordered regions span residues 675–726 (ERPQ…SVSL) and 763–837 (SFTS…RDRS). The segment covering 685-703 (TSSLLPLPGSSKSSNNLKR) has biased composition (low complexity). Over residues 716 to 726 (PRNNSGSSVSL) the composition is skewed to polar residues. Phosphoserine occurs at positions 720 and 725. The span at 763-773 (SFTSNSSSKNN) shows a compositional bias: low complexity. The segment covering 774-792 (SHFDKTDSTSDANKPREEE) has biased composition (basic and acidic residues). The segment covering 805–815 (SSSVRSNNSNS) has biased composition (low complexity).

This sequence belongs to the arrestin family. As to quaternary structure, interacts with RSP5 via its 2 PY-motifs.

Its subcellular location is the membrane. In terms of biological role, mediates resistance to o-dinitrobenzene, calcium and zinc. In Saccharomyces cerevisiae (strain ATCC 204508 / S288c) (Baker's yeast), this protein is Protein ROD1 (ROD1).